A 1495-amino-acid polypeptide reads, in one-letter code: MEENRRNPSAGMEVPVAGGGNVVKWIEISVPSPSVSSSSIGANSSEDNECVQLPLSEDYASSSVIGEPSISFVWRINKTSPNALELLQLSAKSGFPITGLRFVFAQTLSPFAFVYADEGGDSGRLVYFLYSLTPSGVVYVLKLSNTLAYKSGSVFPLDHLIHLDVRPYLNESRVTSVAASPGFIFLGRSDGCVSCFQPIVYFQKSSGFHQELRDDTGFGRLGTVVAAVQDLFISEVHGRNYLCVLHADGALRVWDILTYSRVLCQSIAAKNLEGVMCVRLWLGKADYDSGIIPLAVLYRKSMNDSMDVITVYGLHFSSAEGIALSLDSGLQNIPLEEGELRDVRFTSDKIWTLKANELTSYMLCQKSSTMEAQSYTLQEDYISEQLFLSSRSSSHDLLLTTHSLFSSAKDQIMGFISSIFLRRLLCPGIFHNVALRLTLLDHNKNWTDSEFQSLSLDELTSEILLLVEHEVTAETSISVFHWWKNFCTSYLHHWCSNNEPRTLLVQSDVIGLVRNNSVSLFFRLENAEHSLGGSSSEHSNLTSLDLGVSHSDHEILAEVLRCTSKISKQWGGAPYAMYYESITGRPIISSDEIVPRLVNILESGYSTTIGQRTWSDLGADRAWEKELEAHKNLRTFSIDMLLSLSALCQRAGSWEKVFTIMEHYLQYLVPKKSMQKNDGEALSDICSSILVQATSQFVKVMFESAFDIFLLISYLLNIAGQVNMSQQDICKLRLELLPMIQDIVSEWLIILFFVTTPAESTSMEDFSLKLSSLQIDSSIDKRSWNAMLGKCGFSLAFILLFSDRSCIVDGRFNLRYLPSSQIITSLVQNFISWIRYSKTGDDSSSLLRRSTELSLRLIRNGQSDAVERILVVVEASLRGEKTFGCSQDTSGDWCLLQHLRGCCLLDQVQRGASGILRERKIIDAIRCFFRASSGEGSWKALHSLSKEAGFSPATTGPSILDGSTSSAAWKLHYYEWAMQIFERYNISEGACQFAYAALEQVDDAYNFIEMTEEFDPTKAATYTRGRLWANVFKFTLDLNLLNDAYCAIISNPDEEIKRICLRRFIIVLFECGKTKILSDGHLPFIGLTEKITQELFWKAGRSDIMMKPNPYKLLYAYEMRRHNWRMAASYMYQFSARLRSEGACKDYKHMSLVLQERLNGLSAAMNALALVHPGYAWIDPVPEETTRYPVKKARRAEEEQLRSNDQPKGEKSCIDIEKLQNEFVFTTAEYMLSLKNFGWTYSGLEKPPSDLVDLLVQANLYDMAFTVVLKFWRGSALKRELEKIFENMAIKCCPAKGTLWSSPNLMLTSNDEEVTHSPDRSPADQGSKLAGDWEILEVYLKRYIDIHARLPVSVASTLLQADSCIELPLWLIQMFKDGQKEKALGMAGQEASPASLFQLYVDYGRLTEATNLLLEYMESFASSKPAEVLKRKKVSGVWFPYTTVERLWWELEKTMNSGRMVEQCHKLKEQLHHALLNHLKLLKVDSNDAVSSATG.

In terms of assembly, part of the nuclear pore complex (NPC). The NPC has an eight-fold symmetrical structure comprising a central transport channel and two rings, the cytoplasmic and nuclear rings, to which eight filaments are attached. The cytoplasmic filaments have loose ends, while the nuclear filaments are joined in a distal ring, forming a nuclear basket. NPCs are highly dynamic in configuration and composition, and can be devided in 3 subcomplexes, the NUP62 subcomplex, the NUP107-160 subcomplex and the NUP93 subcomplex, containing approximately 30 different nucleoporin proteins. In terms of tissue distribution, expressed in roots, stems, anthers, siliques and vascular tissues of cotyledons, leaves and hypocotyls.

Its subcellular location is the nucleus membrane. The protein localises to the nucleus. The protein resides in the nuclear pore complex. Its function is as follows. Contributes to the transfer of mature mRNA from the nucleus to the cytosol. Required for both R gene-mediated and basal disease resistance. RNA export seems to play a critical role in stress responses and regulation of plant growth and development. Required for proper expression of factors associated with auxin signaling. This Arabidopsis thaliana (Mouse-ear cress) protein is Nuclear pore complex protein NUP160.